A 195-amino-acid polypeptide reads, in one-letter code: Imidazoleglycerol-phosphate dehydratase (195 aa).

Belongs to the imidazoleglycerol-phosphate dehydratase family.

It localises to the cytoplasm. The enzyme catalyses D-erythro-1-(imidazol-4-yl)glycerol 3-phosphate = 3-(imidazol-4-yl)-2-oxopropyl phosphate + H2O. The protein operates within amino-acid biosynthesis; L-histidine biosynthesis; L-histidine from 5-phospho-alpha-D-ribose 1-diphosphate: step 6/9. This Thiobacillus denitrificans (strain ATCC 25259 / T1) protein is Imidazoleglycerol-phosphate dehydratase.